The chain runs to 455 residues: Ribosomal protein uS12 methylthiotransferase RimO (455 aa).

In terms of domain architecture, MTTase N-terminal spans 10 to 120 (PKVGMVSLGC…VVEAVHDAAP (111 aa)). Residues Cys19, Cys55, Cys84, Cys151, Cys155, and Cys158 each contribute to the [4Fe-4S] cluster site. Residues 137-380 (LTPRHYSYLK…MAKTAAISAA (244 aa)) form the Radical SAM core domain. The TRAM domain occupies 383 to 455 (EAKIGRTLPV…DEHDLFGVVT (73 aa)).

Belongs to the methylthiotransferase family. RimO subfamily. [4Fe-4S] cluster serves as cofactor.

It is found in the cytoplasm. The catalysed reaction is L-aspartate(89)-[ribosomal protein uS12]-hydrogen + (sulfur carrier)-SH + AH2 + 2 S-adenosyl-L-methionine = 3-methylsulfanyl-L-aspartate(89)-[ribosomal protein uS12]-hydrogen + (sulfur carrier)-H + 5'-deoxyadenosine + L-methionine + A + S-adenosyl-L-homocysteine + 2 H(+). In terms of biological role, catalyzes the methylthiolation of an aspartic acid residue of ribosomal protein uS12. This chain is Ribosomal protein uS12 methylthiotransferase RimO, found in Sphingopyxis alaskensis (strain DSM 13593 / LMG 18877 / RB2256) (Sphingomonas alaskensis).